The following is a 517-amino-acid chain: MAAAITDMADLEELSRLSPLPPGSPGSAARGRAEPPEEEEEEEEEEEEAEAEAVAALLLNGGSGGGGGGGGGGVGGGEAETMSEPSPESASQAGEDEDEEEDDEEEEDESSSSGGGEEESSAESLVGSSGGSSSDETRSLSPGAASSSSGDGDGKEGLEEPKGPRGSQGGGGGGSSSSSVVSSGGDEGYGTGGGGSSATSGGRRGSLEMSSDGEPLSRMDSEDSISSTIMDVDSTISSGRSTPAMMNGQGSTTSSSKNIAYNCCWDQCQACFNSSPDLADHIRSIHVDGQRGGVFVCLWKGCKVYNTPSTSQSWLQRHMLTHSGDKPFKCVVGGCNASFASQGGLARHVPTHFSQQNSSKVSSQPKAKEESPSKAGMNKRRKLKNKRRRSLPRPHDFFDAQTLDAIRHRAICFNLSAHIESLGKGHSVVFHSTVIAKRKEDSGKIKLLLHWMPEDILPDVWVNESERHQLKTKVVHLSKLPKDTALLLDPNIYRTMPQKRLKRTLIRKVFNLYLSKQ.

The tract at residues 1–229 is disordered; that stretch reads MAAAITDMAD…DSEDSISSTI (229 aa). At alanine 2 the chain carries N-acetylalanine. A phosphoserine mark is found at serine 18 and serine 24. A compositionally biased stretch (acidic residues) spans 36–51; it reads PEEEEEEEEEEEEAEA. Residues 61 to 78 are compositionally biased toward gly residues; the sequence is GGSGGGGGGGGGGVGGGE. The span at 94 to 121 shows a compositional bias: acidic residues; that stretch reads GEDEDEEEDDEEEEDESSSSGGGEEESS. The span at 122 to 150 shows a compositional bias: low complexity; sequence AESLVGSSGGSSSDETRSLSPGAASSSSG. Serine 141 carries the phosphoserine modification. Over residues 152 to 163 the composition is skewed to basic and acidic residues; it reads GDGKEGLEEPKG. Composition is skewed to gly residues over residues 166–175 and 185–196; these read GSQGGGGGGS and GDEGYGTGGGGS. Phosphoserine occurs at positions 206, 210, and 211. An interaction with RBBP4 region spans residues 209 to 294; it reads MSSDGEPLSR…IHVDGQRGGV (86 aa). The segment at 261-286 adopts a C2H2-type 1 zinc-finger fold; it reads YNCCWDQCQACFNSSPDLADHIRSIH. A C2H2-type 2; degenerate zinc finger spans residues 300–322; the sequence is KGCKVYNTPSTSQSWLQRHMLTH. The C2H2-type 3 zinc finger occupies 328–352; sequence FKCVVGGCNASFASQGGLARHVPTH. Over residues 352 to 365 the composition is skewed to polar residues; the sequence is HFSQQNSSKVSSQP. The disordered stretch occupies residues 352 to 394; the sequence is HFSQQNSSKVSSQPKAKEESPSKAGMNKRRKLKNKRRRSLPRP. Over residues 377 to 392 the composition is skewed to basic residues; the sequence is MNKRRKLKNKRRRSLP. Residue serine 390 is modified to Phosphoserine. Residues 407–478 form an interaction with SUZ12 region; the sequence is RHRAICFNLS…QLKTKVVHLS (72 aa). The important for nucleosome binding activity of the PRC2 complex stretch occupies residues 495–517; it reads TMPQKRLKRTLIRKVFNLYLSKQ.

This sequence belongs to the AEBP2/jing C2H2-type zinc-finger family. In terms of assembly, self-associates. Associates with the PRC2 complex, which consists of the core components EED, EZH1 or EZH2, SUZ12, and RBBP4, and various combinations of accessory subunits including AEBP2, JARID2, PHF19, MTF2 and EPOP. Found in a monomeric PRC2.2 (class 2) complex consisting of at least SUZ12, RBBP4, AEBP2 and JARID2. Within the PRC2 complex, interacts directly with SUZ12; competes with PHF19 for SUZ12 binding. Interacts with EED, EZH2, and RBBP4. May also interact with RBBP7.

It is found in the nucleus. Its function is as follows. Acts as an accessory subunit for the core Polycomb repressive complex 2 (PRC2), which mediates histone H3K27 (H3K27me3) trimethylation on chromatin leading to transcriptional repression of the affected target gene. Plays a role in nucleosome localization of the PRC2 complex. The protein is Zinc finger protein AEBP2 (AEBP2) of Homo sapiens (Human).